Consider the following 57-residue polypeptide: Large ribosomal subunit protein bL33 (57 aa).

It belongs to the bacterial ribosomal protein bL33 family.

The polypeptide is Large ribosomal subunit protein bL33 (Shewanella denitrificans (strain OS217 / ATCC BAA-1090 / DSM 15013)).